The sequence spans 995 residues: Putative pentatricopeptide repeat-containing protein At5g09950 (995 aa).

22 PPR repeats span residues 35–65 (DVYLCNNLINAYLETGDSVSARKVFDEMPLR), 66–100 (NCVSWACIVSGYSRNGEHKEALVFLRDMVKEGIFS), 101–137 (NQYAFVSVLRACQEIGSVGILFGRQIHGLMFKLSYAV), 138–169 (DAVVSNVLISMYWKCIGSVGYALCAFGDIEVK), 170–204 (NSVSWNSIISVYSQAGDQRSAFRIFSSMQYDGSRP), 205–241 (TEYTFGSLVTTACSLTEPDVRLLEQIMCTIQKSGLLT), 242–276 (DLFVGSGLVSAFAKSGSLSYARKVFNQMETRNAVT), 278–303 (NGLMVGLVRQKWGEEATKLFMDMNSM), 307–342 (SPESYVILLSSFPEYSLAEEVGLKKGREVHGHVITT), 348–378 (MVGIGNGLVNMYAKCGSIADARRVFYFMTDK), 379–413 (DSVSWNSMITGLDQNGCFIEAVERYKSMRRHDILP), 414–448 (GSFTLISSLSSCASLKWAKLGQQIHGESLKLGIDL), 449–483 (NVSVSNALMTLYAETGYLNECRKIFSSMPEHDQVS), 484–515 (WNSIIGALARSERSLPEAVVCFLNAQRAGQKL), 516–550 (NRITFSSVLSAVSSLSFGELGKQIHGLALKNNIAD), 551–581 (EATTENALIACYGKCGEMDGCEKIFSRMAER), 583–617 (DNVTWNSMISGYIHNELLAKALDLVWFMLQTGQRL), 618–652 (DSFMYATVLSAFASVATLERGMEVHACSVRACLES), 653–683 (DVVVGSALVDMYSKCGRLDYALRFFNTMPVR), 684–718 (NSYSWNSMISGYARHGQGEEALKLFETMKLDGQTP), 720–750 (DHVTFVGVLSACSHAGLLEEGFKHFESMSDS), and 756–786 (RIEHFSCMADVLGRAGELDKLEDFIEKMPMK). The segment at 791-868 (IWRTVLGACC…EAGYSWVTMK (78 aa)) is type E motif. Residues 869–899 (DGVHMFVAGDKSHPDADVIYKKLKELNRKMR) form a type E(+) motif region. Positions 900–995 (DAGYVPQTGF…DGACSCSDFW (96 aa)) are type DYW motif.

Belongs to the PPR family. PCMP-H subfamily.

In Arabidopsis thaliana (Mouse-ear cress), this protein is Putative pentatricopeptide repeat-containing protein At5g09950 (PCMP-H35).